Reading from the N-terminus, the 564-residue chain is Carbamoyl phosphate synthase large chain, N-terminal section (564 aa).

The carboxyphosphate synthetic domain stretch occupies residues 1 to 399; the sequence is MPETPNKVLI…ALQKAIRSLE (399 aa). The ATP site is built by arginine 127, arginine 167, glycine 173, glycine 174, glutamate 206, valine 208, glutamate 213, glycine 239, valine 240, histidine 241, glutamine 282, and glutamate 296. Residues 131–325 form the ATP-grasp domain; that stretch reads RAFMKKIGEP…IARIAAKIAI (195 aa). Residues glutamine 282, glutamate 296, and asparagine 298 each coordinate Mg(2+). 3 residues coordinate Mn(2+): glutamine 282, glutamate 296, and asparagine 298. Residues 400–560 form an oligomerization domain region; the sequence is IGEPGLGPSP…YSTYEEECEA (161 aa).

It belongs to the CarB family. In terms of assembly, composed of two chains; the small (or glutamine) chain promotes the hydrolysis of glutamine to ammonia, which is used by the large (or ammonia) chain to synthesize carbamoyl phosphate. Tetramer of heterodimers (alpha,beta)4. It depends on Mg(2+) as a cofactor. Mn(2+) is required as a cofactor.

The enzyme catalyses hydrogencarbonate + L-glutamine + 2 ATP + H2O = carbamoyl phosphate + L-glutamate + 2 ADP + phosphate + 2 H(+). The catalysed reaction is hydrogencarbonate + NH4(+) + 2 ATP = carbamoyl phosphate + 2 ADP + phosphate + 2 H(+). It participates in amino-acid biosynthesis; L-arginine biosynthesis; carbamoyl phosphate from bicarbonate: step 1/1. Its pathway is pyrimidine metabolism; UMP biosynthesis via de novo pathway; (S)-dihydroorotate from bicarbonate: step 1/3. Large subunit of the glutamine-dependent carbamoyl phosphate synthetase (CPSase). CPSase catalyzes the formation of carbamoyl phosphate from the ammonia moiety of glutamine, carbonate, and phosphate donated by ATP, constituting the first step of 2 biosynthetic pathways, one leading to arginine and/or urea and the other to pyrimidine nucleotides. The large subunit (synthetase) binds the substrates ammonia (free or transferred from glutamine from the small subunit), hydrogencarbonate and ATP and carries out an ATP-coupled ligase reaction, activating hydrogencarbonate by forming carboxy phosphate which reacts with ammonia to form carbamoyl phosphate. In Methanopyrus kandleri (strain AV19 / DSM 6324 / JCM 9639 / NBRC 100938), this protein is Carbamoyl phosphate synthase large chain, N-terminal section (carB1).